A 249-amino-acid chain; its full sequence is MGRGRVELKRIENKINRQVTFAKRRNGLLKKAYELSVLCDAEVALIIFSNRGKLYEFCSTQSMTKTLEKYQKCSYAGPETAVQNRESEQLKASRNEYLKLKARVENLQRTQRNLLGEDLDSLGIKELESLEKQLDSSLKHVRTTRTKHLVDQLTELQRKEQMVSEANRCLRRKLEESNHVRGQQVWEQGCNLIGYERQPEVQQPLHGGNGFFHPLDAAGEPTLQIGYPAEHHEAMNSACMNTYMPPWLP.

The 61-residue stretch at 1 to 61 folds into the MADS-box domain; the sequence is MGRGRVELKR…GKLYEFCSTQ (61 aa). The 91-residue stretch at 90-180 folds into the K-box domain; sequence LKASRNEYLK…RRKLEESNHV (91 aa).

As to quaternary structure, may interact with the K-box of MADS6. May interact with MADS13 and MADS18. In terms of tissue distribution, expressed in lodicules, stamens and carpels.

Its subcellular location is the nucleus. In terms of biological role, probable transcription factor. May be involved in the control of flowering time. The chain is MADS-box transcription factor 7 (MADS7) from Oryza sativa subsp. japonica (Rice).